The sequence spans 511 residues: Maturase K (511 aa).

It belongs to the intron maturase 2 family. MatK subfamily.

It localises to the plastid. It is found in the chloroplast. Functionally, usually encoded in the trnK tRNA gene intron. Probably assists in splicing its own and other chloroplast group II introns. This Triticum aestivum (Wheat) protein is Maturase K.